The primary structure comprises 513 residues: Sterol 14-alpha demethylase (513 aa).

The helical transmembrane segment at 8–28 threads the bilayer; that stretch reads AYALLAFVAIMALNVTYQFLF. 2 N-linked (GlcNAc...) asparagine glycosylation sites follow: Asn32 and Asn332. Cys453 lines the heme pocket.

This sequence belongs to the cytochrome P450 family. Requires heme as cofactor.

It is found in the endoplasmic reticulum membrane. It catalyses the reaction a 14alpha-methyl steroid + 3 reduced [NADPH--hemoprotein reductase] + 3 O2 = a Delta(14) steroid + formate + 3 oxidized [NADPH--hemoprotein reductase] + 4 H2O + 4 H(+). It carries out the reaction a 14alpha-methyl steroid + reduced [NADPH--hemoprotein reductase] + O2 = a 14alpha-hydroxymethyl steroid + oxidized [NADPH--hemoprotein reductase] + H2O + H(+). The catalysed reaction is a 14alpha-hydroxymethyl steroid + reduced [NADPH--hemoprotein reductase] + O2 = a 14alpha-formyl steroid + oxidized [NADPH--hemoprotein reductase] + 2 H2O + H(+). The enzyme catalyses a 14alpha-formyl steroid + reduced [NADPH--hemoprotein reductase] + O2 = a Delta(14) steroid + formate + oxidized [NADPH--hemoprotein reductase] + H2O + 2 H(+). It catalyses the reaction lanosterol + 3 reduced [NADPH--hemoprotein reductase] + 3 O2 = 4,4-dimethyl-5alpha-cholesta-8,14,24-trien-3beta-ol + formate + 3 oxidized [NADPH--hemoprotein reductase] + 4 H2O + 4 H(+). It carries out the reaction lanosterol + reduced [NADPH--hemoprotein reductase] + O2 = 32-hydroxylanosterol + oxidized [NADPH--hemoprotein reductase] + H2O + H(+). The catalysed reaction is 32-hydroxylanosterol + reduced [NADPH--hemoprotein reductase] + O2 = 32-oxolanosterol + oxidized [NADPH--hemoprotein reductase] + 2 H2O + H(+). The enzyme catalyses 32-oxolanosterol + reduced [NADPH--hemoprotein reductase] + O2 = 4,4-dimethyl-5alpha-cholesta-8,14,24-trien-3beta-ol + formate + oxidized [NADPH--hemoprotein reductase] + H2O + 2 H(+). It catalyses the reaction eburicol + 3 reduced [NADPH--hemoprotein reductase] + 3 O2 = 14-demethyleburicol + formate + 3 oxidized [NADPH--hemoprotein reductase] + 4 H2O + 4 H(+). It carries out the reaction eburicol + reduced [NADPH--hemoprotein reductase] + O2 = 32-hydroxyeburicol + oxidized [NADPH--hemoprotein reductase] + H2O + H(+). The catalysed reaction is 32-hydroxyeburicol + reduced [NADPH--hemoprotein reductase] + O2 = 32-oxoeburicol + oxidized [NADPH--hemoprotein reductase] + 2 H2O + H(+). The enzyme catalyses 32-oxoeburicol + reduced [NADPH--hemoprotein reductase] + O2 = 14-demethyleburicol + formate + oxidized [NADPH--hemoprotein reductase] + H2O + 2 H(+). Its pathway is steroid biosynthesis; sterol biosynthesis. Sterol 14alpha-demethylase, encoded by cyp51A, cyp51B and cyp51C, that plays a critical role in the third module of ergosterol biosynthesis pathway, being ergosterol the major sterol component in fungal membranes that participates in a variety of functions. The third module or late pathway involves the ergosterol synthesis itself through consecutive reactions that mainly occur in the endoplasmic reticulum (ER) membrane. In filamentous fungi, during the initial step of this module, lanosterol (lanosta-8,24-dien-3beta-ol) can be metabolized to eburicol. Sterol 14alpha-demethylase catalyzes the three-step oxidative removal of the 14alpha-methyl group (C-32) of both these sterols in the form of formate, and converts eburicol and lanosterol to 14-demethyleburicol (4,4,24-trimethylergosta-8,14,24(28)-trienol) and 4,4-dimethyl-5alpha-cholesta-8,14,24-trien-3beta-ol, respectively, which are further metabolized by other enzymes in the pathway to ergosterol. Can also use substrates not intrinsic to fungi, such as 24,25-dihydrolanosterol (DHL), producing 4,4'-dimethyl-8,14-cholestadien-3-beta-ol, but at lower rates than the endogenous substrates. Functionally, as a target of azole drugs, plays a crucial role in azole drug susceptibility. In Aspergillus flavus (strain ATCC 200026 / FGSC A1120 / IAM 13836 / NRRL 3357 / JCM 12722 / SRRC 167), this protein is Sterol 14-alpha demethylase.